An 89-amino-acid chain; its full sequence is Luqin-like RYamide peptides lury-1 (89 aa).

An N-terminal signal peptide occupies residues 1–19 (MLTRVPVLILAVIVMLALC). A propeptide spanning residues 20–26 (QEPEKPE) is cleaved from the precursor. 2 positions are modified to tyrosine amide: Y35 and Y43. The propeptide occupies 47 to 89 (SGNLMESSQNSLTEESSDVVCQLIDGKYICLPVDAVRFRPFFL).

Expressed in the M1 and M2 pharyngeal neurons from where the LURY-1-1 and LURY-1-2 peptides are secreted.

It localises to the secreted. In terms of biological role, acts as a ligand for the npr-22 receptor and controls food-related processes including feeding, lifespan, egg-laying and roaming behavior. Secreted in the presence of food, leading to reduced feeding and roaming behavior and increased egg laying and lifespan. Activity may be latent under normal conditions but induced under conditions that cause hyperactivation of the pharynx such as abrupt refeeding after starvation. The polypeptide is Luqin-like RYamide peptides lury-1 (Caenorhabditis elegans).